Here is a 134-residue protein sequence, read N- to C-terminus: Syncollin (134 aa).

Positions 1 to 21 (MSPLCLLLLALALVAVPGARG) are cleaved as a signal peptide.

As to quaternary structure, monomer and homooligomer; most probably hexameric. Interacts with GP2. According to PubMed:10753942 interaction with syntaxins shown in PubMed:9244306 is physiologically questionable. Post-translationally, contains intrachain disulfide bonds. As to expression, specifically expressed in pancreas and also detected in secretory granules of parotid gland (at protein level). Expressed in pancreas, spleen, small intestine, lung and neutrophilic granulocytes (at protein level). Expressed by epithelial cells in duodenum and colon.

It is found in the zymogen granule membrane. It localises to the zymogen granule lumen. Its function is as follows. Functions in exocytosis in pancreatic acinar cells regulating the fusion of zymogen granules with each other. May have a pore-forming activity on membranes and regulate exocytosis in other exocrine tissues. The polypeptide is Syncollin (Sycn) (Rattus norvegicus (Rat)).